We begin with the raw amino-acid sequence, 248 residues long: tRNA (guanine-N(1)-)-methyltransferase (248 aa).

S-adenosyl-L-methionine contacts are provided by residues Gly-113 and 133 to 138 (IGDYVL).

Belongs to the RNA methyltransferase TrmD family. In terms of assembly, homodimer.

It is found in the cytoplasm. The catalysed reaction is guanosine(37) in tRNA + S-adenosyl-L-methionine = N(1)-methylguanosine(37) in tRNA + S-adenosyl-L-homocysteine + H(+). Functionally, specifically methylates guanosine-37 in various tRNAs. This is tRNA (guanine-N(1)-)-methyltransferase from Shewanella frigidimarina (strain NCIMB 400).